The sequence spans 385 residues: Spermidine/putrescine import ATP-binding protein PotA (385 aa).

In terms of domain architecture, ABC transporter spans 6–238; the sequence is IEFKNVSKVF…PINHFVATFI (233 aa). 40–47 is a binding site for ATP; it reads GSSGSGKS.

This sequence belongs to the ABC transporter superfamily. Spermidine/putrescine importer (TC 3.A.1.11.1) family. The complex is composed of two ATP-binding proteins (PotA), two transmembrane proteins (PotB and PotC) and a solute-binding protein (PotD).

It localises to the cell membrane. The catalysed reaction is ATP + H2O + polyamine-[polyamine-binding protein]Side 1 = ADP + phosphate + polyamineSide 2 + [polyamine-binding protein]Side 1.. In terms of biological role, part of the ABC transporter complex PotABCD involved in spermidine/putrescine import. Responsible for energy coupling to the transport system. This is Spermidine/putrescine import ATP-binding protein PotA from Streptococcus sanguinis (strain SK36).